A 316-amino-acid polypeptide reads, in one-letter code: 33 kDa chaperonin (316 aa).

2 disulfide bridges follow: Cys239–Cys241 and Cys272–Cys275.

The protein belongs to the HSP33 family. In terms of processing, under oxidizing conditions two disulfide bonds are formed involving the reactive cysteines. Under reducing conditions zinc is bound to the reactive cysteines and the protein is inactive.

The protein localises to the cytoplasm. Redox regulated molecular chaperone. Protects both thermally unfolding and oxidatively damaged proteins from irreversible aggregation. Plays an important role in the bacterial defense system toward oxidative stress. The protein is 33 kDa chaperonin of Clostridium perfringens (strain SM101 / Type A).